Reading from the N-terminus, the 665-residue chain is Protein-arginine deiminase type-2 (665 aa).

The Ca(2+) site is built by Asp-123, Asp-125, Asp-127, Val-129, Glu-131, Asn-154, Asp-156, Glu-158, Asp-166, Asp-169, Lys-171, Asp-177, Asp-180, Glu-354, Asp-389, Phe-408, Leu-411, and Glu-412. Cys-647 (nucleophile) is an active-site residue.

The protein belongs to the protein arginine deiminase family. In terms of assembly, homodimer. Requires Ca(2+) as cofactor. In terms of tissue distribution, detected in keratinocytes in epidermis (at protein level).

It is found in the cytoplasm. It carries out the reaction L-arginyl-[protein] + H2O = L-citrullyl-[protein] + NH4(+). Its function is as follows. Catalyzes the deimination of arginine residues of proteins. This chain is Protein-arginine deiminase type-2 (PADI2), found in Homo sapiens (Human).